Consider the following 440-residue polypeptide: Thymidine phosphorylase (440 aa).

Belongs to the thymidine/pyrimidine-nucleoside phosphorylase family. As to quaternary structure, homodimer.

The catalysed reaction is thymidine + phosphate = 2-deoxy-alpha-D-ribose 1-phosphate + thymine. It functions in the pathway pyrimidine metabolism; dTMP biosynthesis via salvage pathway; dTMP from thymine: step 1/2. In terms of biological role, the enzymes which catalyze the reversible phosphorolysis of pyrimidine nucleosides are involved in the degradation of these compounds and in their utilization as carbon and energy sources, or in the rescue of pyrimidine bases for nucleotide synthesis. The sequence is that of Thymidine phosphorylase from Escherichia coli (strain 55989 / EAEC).